The following is an 80-amino-acid chain: MYILGLGIGALVVTFIIAVIVWTIVYIEYKKLVRQKKIDRLIERIGERAEDSGNESDGDTEELSKLMEMGHLNLGYVADL.

The Extracellular portion of the chain corresponds to Met-1 to Leu-6. The helical transmembrane segment at Gly-7–Ile-27 threads the bilayer. Residues Glu-28–Leu-80 are Cytoplasmic-facing. Ser-52 and Ser-56 each carry phosphoserine; by host CK2.

Belongs to the HIV-1 VPU protein family. In terms of assembly, homopentamer. Interacts with host CD4 and BRTC; these interactions induce proteasomal degradation of CD4. Interacts with host BST2; this interaction leads to the degradation of host BST2. Interacts with host FBXW11. Interacts with host AP1M1; this interaction plays a role in the mistrafficking and subsequent degradation of host BST2. Interacts with host RANBP2; this interaction allows Vpu to down-regulate host BLM sumoylation. In terms of processing, phosphorylated by host CK2. This phosphorylation is necessary for interaction with human BTRC and degradation of CD4.

The protein resides in the host membrane. Its activity is regulated as follows. Ion channel activity is inhibited by hexamethylene amiloride in vitro. In terms of biological role, enhances virion budding by targeting host CD4 and Tetherin/BST2 to proteasome degradation. Degradation of CD4 prevents any unwanted premature interactions between viral Env and its host receptor CD4 in the endoplasmic reticulum. Degradation of antiretroviral protein Tetherin/BST2 is important for virion budding, as BST2 tethers new viral particles to the host cell membrane. Mechanistically, Vpu bridges either CD4 or BST2 to BTRC, a substrate recognition subunit of the Skp1/Cullin/F-box protein E3 ubiquitin ligase, induces their ubiquitination and subsequent proteasomal degradation. The alteration of the E3 ligase specificity by Vpu seems to promote the degradation of host IKBKB, leading to NF-kappa-B down-regulation and subsequent apoptosis. Acts as a viroporin that forms an oligomeric ion channel in membranes. Modulates the host DNA repair mechanisms to promote degradation of nuclear viral cDNA in cells that are already productively infected in order to suppress immune sensing and proviral hyper-integration (superinfection). Manipulates PML-NBs and modulates SUMOylation of host BLM protein thereby enhancing its DNA-end processing activity toward viral unintegrated linear DNA. Also inhibits RAD52-mediated homologous repair of viral cDNA, preventing the generation of dead-end circular forms of single copies of the long terminal repeat and permitting sustained nucleolytic attack. This Human immunodeficiency virus type 1 group M subtype H (isolate 90CF056) (HIV-1) protein is Protein Vpu.